Here is an 835-residue protein sequence, read N- to C-terminus: Involucrin (835 aa).

A compositionally biased stretch (polar residues) spans Met1 to Leu15. 8 disordered regions span residues Met1–Arg133, Glu150–Pro206, Gly221–His285, Gly321–Gln342, Gly381–Glu428, Leu446–Pro486, Gly501–Glu548, and Leu566–Leu809. The segment covering Glu76 to His91 has biased composition (low complexity). 2 stretches are compositionally biased toward basic and acidic residues: residues Trp92 to Arg115 and Gln159 to Gln168. Low complexity predominate over residues Gln169–Gly181. Composition is skewed to basic and acidic residues over residues Gln182–Gln198 and Gln222–Gln268. 3 stretches are compositionally biased toward low complexity: residues Gln269 to Gly281, Gln329 to Gly341, and Gln389 to Gly401. Basic and acidic residues-rich tracts occupy residues Gln402–Gly421 and Leu446–Glu464. The segment covering Gln509–Gly521 has biased composition (low complexity). Composition is skewed to basic and acidic residues over residues Gln522–Gly541, Leu566–Glu584, and Lys594–Glu620. The span at His655–Gly668 shows a compositional bias: low complexity. Over residues Gln669–Glu685 the composition is skewed to basic and acidic residues. The segment covering Leu693–Pro710 has biased composition (low complexity). Basic and acidic residues-rich tracts occupy residues Lys711–Glu721, Gln729–Ala738, and Lys751–Gln775. The segment covering Gln776–Gln789 has biased composition (polar residues).

The protein belongs to the involucrin family. As to quaternary structure, directly or indirectly cross-linked to cornifelin (CNFN). Substrate of transglutaminase. Specific glutamines or lysines are cross-linked to keratins, desmoplakin and to inter involucrin molecules. In terms of tissue distribution, keratinocytes of epidermis and other stratified squamous epithelia.

The protein localises to the cytoplasm. Its function is as follows. Part of the insoluble cornified cell envelope (CE) of stratified squamous epithelia. The protein is Involucrin (IVL) of Pongo pygmaeus (Bornean orangutan).